Consider the following 142-residue polypeptide: Large ribosomal subunit protein uL13 (142 aa).

The protein belongs to the universal ribosomal protein uL13 family. Part of the 50S ribosomal subunit.

This protein is one of the early assembly proteins of the 50S ribosomal subunit, although it is not seen to bind rRNA by itself. It is important during the early stages of 50S assembly. This chain is Large ribosomal subunit protein uL13, found in Glaesserella parasuis serovar 5 (strain SH0165) (Haemophilus parasuis).